A 505-amino-acid chain; its full sequence is MAQVINTNSLSLLTQNNLNKSQSSLSSAIERLSSGLRINSAKDDAAGQAIANRFTSNIKGLTQASRNANDGISIAQTTEGALNEINNNLQRVRELSVQATNGTNSDSDLKSIQDEIQQRLEEIDRVSNQTQFNGVKVLSQDNQMKIQVGANDGETITIDLQKIDVKSLGLDGFNVNGPKEATVGDLKSSFKNVTGYDTYAAGADKYRVDINSGAVVTDAVAPNKVYVNAANGQLTTDDAENNTAVDLFKTTKSTAGTAEAKAIAGAIKGGKEGDTFDYKGVTFTIDTKTGNDGNGKVSTTINGEKVTLTVADITGGAANVDAATLQSSKNVYTSVVNGQFTFDDKTKNESAKLSDLEANNAVKGESKITVNGAEYTANATGDKVTLAGKTMFIDKTASGVSTLINEDAAAAKKSTANPLASIDSALSKVDAVRSSLGAIQNRFDSAITNLGNTVTNLNSARSRIEDADYATEVSNMSKAQILQQAGTSVLAQANQVPQNVLSLLR.

Belongs to the bacterial flagellin family.

It is found in the secreted. It localises to the bacterial flagellum. In terms of biological role, flagellin is the subunit protein which polymerizes to form the filaments of bacterial flagella. The polypeptide is Flagellin (fliC) (Salmonella derby).